The chain runs to 190 residues: MKLVFATHNPNKFREIKSLVPKHIELLSLSDINCNEDIEETGDTIDENAMIKADYVRNHYGYDCFADDTGLEVHSLAGAPGVYSARYAGDEKNDEANIEKLLEQLKKRDDRTARFKTVIALNLKGNQNLFTGICEGEILEEKTGTKGFGYDPIFLPNGFESSFAEMELTEKSKISHRGIAFRELMEYLSK.

7–12 (THNPNK) serves as a coordination point for substrate. Mg(2+) is bound by residues glutamate 39 and aspartate 68. Residue aspartate 68 is the Proton acceptor of the active site. Substrate is bound by residues threonine 69, 148-151 (FGYD), lysine 171, and 176-177 (HR).

It belongs to the HAM1 NTPase family. In terms of assembly, homodimer. Mg(2+) serves as cofactor.

It catalyses the reaction XTP + H2O = XMP + diphosphate + H(+). The enzyme catalyses dITP + H2O = dIMP + diphosphate + H(+). It carries out the reaction ITP + H2O = IMP + diphosphate + H(+). Its function is as follows. Pyrophosphatase that catalyzes the hydrolysis of nucleoside triphosphates to their monophosphate derivatives, with a high preference for the non-canonical purine nucleotides XTP (xanthosine triphosphate), dITP (deoxyinosine triphosphate) and ITP. Seems to function as a house-cleaning enzyme that removes non-canonical purine nucleotides from the nucleotide pool, thus preventing their incorporation into DNA/RNA and avoiding chromosomal lesions. This chain is dITP/XTP pyrophosphatase, found in Christiangramia forsetii (strain DSM 17595 / CGMCC 1.15422 / KT0803) (Gramella forsetii).